Reading from the N-terminus, the 354-residue chain is MSRRQAISTTAMSQDLDQIVADAQAAFAAANDNATLENEKARFLGKTGALTELLKGLGKLDPETRKTEGARINQVKQQVEAALTARRQALADALMNARLSAEAIDVTLPGRAVSRGSLHPVMRTWERVEQIFGSIGFDVADGPEIETDWMNFTALNNPDNHPARSMQDTFYIDGRDSDDKLLLLRTHTSPMQVRYAKMHVEKYAGKAMPPIKVICPGRTYRVDSDATHSPMFNQVEGLWIGEDVSFADLKGVYTDFLRKFFERDDIQVRFRPSYFPFTEPSAEIDMAFGNGKWLEISGSGQVHPNVLRNMGLDPERYIGFAFGSGLERLTMLRYGINDLRLFFEGDVRFLRQFA.

E279 lines the Mg(2+) pocket.

The protein belongs to the class-II aminoacyl-tRNA synthetase family. Phe-tRNA synthetase alpha subunit type 1 subfamily. As to quaternary structure, tetramer of two alpha and two beta subunits. The cofactor is Mg(2+).

It is found in the cytoplasm. The enzyme catalyses tRNA(Phe) + L-phenylalanine + ATP = L-phenylalanyl-tRNA(Phe) + AMP + diphosphate + H(+). The protein is Phenylalanine--tRNA ligase alpha subunit of Cupriavidus pinatubonensis (strain JMP 134 / LMG 1197) (Cupriavidus necator (strain JMP 134)).